We begin with the raw amino-acid sequence, 319 residues long: Ribosomal RNA small subunit methyltransferase H (319 aa).

Residues Gly-37 to Tyr-39, Asp-57, Phe-96, Asp-105, and Gln-112 each bind S-adenosyl-L-methionine. The segment covering Arg-292 to Pro-302 has biased composition (basic and acidic residues). A disordered region spans residues Arg-292–Ala-319.

It belongs to the methyltransferase superfamily. RsmH family.

The protein resides in the cytoplasm. It catalyses the reaction cytidine(1402) in 16S rRNA + S-adenosyl-L-methionine = N(4)-methylcytidine(1402) in 16S rRNA + S-adenosyl-L-homocysteine + H(+). Specifically methylates the N4 position of cytidine in position 1402 (C1402) of 16S rRNA. This Syntrophobacter fumaroxidans (strain DSM 10017 / MPOB) protein is Ribosomal RNA small subunit methyltransferase H.